The following is a 295-amino-acid chain: Ribosomal RNA small subunit methyltransferase A (295 aa).

Residues Asn33, Val35, Gly60, Glu81, Asp111, and Asn129 each coordinate S-adenosyl-L-methionine.

Belongs to the class I-like SAM-binding methyltransferase superfamily. rRNA adenine N(6)-methyltransferase family. RsmA subfamily.

Its subcellular location is the cytoplasm. It carries out the reaction adenosine(1518)/adenosine(1519) in 16S rRNA + 4 S-adenosyl-L-methionine = N(6)-dimethyladenosine(1518)/N(6)-dimethyladenosine(1519) in 16S rRNA + 4 S-adenosyl-L-homocysteine + 4 H(+). Functionally, specifically dimethylates two adjacent adenosines (A1518 and A1519) in the loop of a conserved hairpin near the 3'-end of 16S rRNA in the 30S particle. May play a critical role in biogenesis of 30S subunits. The polypeptide is Ribosomal RNA small subunit methyltransferase A (Corynebacterium diphtheriae (strain ATCC 700971 / NCTC 13129 / Biotype gravis)).